The following is a 551-amino-acid chain: Methionine--tRNA ligase (551 aa).

A 'HIGH' region motif is present at residues 12 to 22; it reads PYANGPLHFGH. Zn(2+) is bound by residues C144, C147, C157, and C160. A 'KMSKS' region motif is present at residues 330–334; sequence QFSKS. K333 serves as a coordination point for ATP.

This sequence belongs to the class-I aminoacyl-tRNA synthetase family. MetG type 1 subfamily. In terms of assembly, monomer. Zn(2+) is required as a cofactor.

The protein resides in the cytoplasm. The catalysed reaction is tRNA(Met) + L-methionine + ATP = L-methionyl-tRNA(Met) + AMP + diphosphate. Is required not only for elongation of protein synthesis but also for the initiation of all mRNA translation through initiator tRNA(fMet) aminoacylation. In Chlamydia abortus (strain DSM 27085 / S26/3) (Chlamydophila abortus), this protein is Methionine--tRNA ligase.